The sequence spans 416 residues: Gamma-glutamyl phosphate reductase (416 aa).

The protein belongs to the gamma-glutamyl phosphate reductase family.

The protein resides in the cytoplasm. The enzyme catalyses L-glutamate 5-semialdehyde + phosphate + NADP(+) = L-glutamyl 5-phosphate + NADPH + H(+). The protein operates within amino-acid biosynthesis; L-proline biosynthesis; L-glutamate 5-semialdehyde from L-glutamate: step 2/2. Functionally, catalyzes the NADPH-dependent reduction of L-glutamate 5-phosphate into L-glutamate 5-semialdehyde and phosphate. The product spontaneously undergoes cyclization to form 1-pyrroline-5-carboxylate. The chain is Gamma-glutamyl phosphate reductase from Halalkalibacterium halodurans (strain ATCC BAA-125 / DSM 18197 / FERM 7344 / JCM 9153 / C-125) (Bacillus halodurans).